We begin with the raw amino-acid sequence, 623 residues long: Alpha-1,2-mannosyltransferase Alg9 (623 aa).

8 helical membrane-spanning segments follow: residues Leu152–Met172, Leu193–Trp223, Phe229–Leu254, Phe266–Ile284, Phe326–Leu348, Phe360–Ala378, Ile390–Phe410, and Phe431–Tyr452.

Belongs to the glycosyltransferase 22 family.

It localises to the endoplasmic reticulum membrane. It catalyses the reaction an alpha-D-Man-(1-&gt;2)-alpha-D-Man-(1-&gt;2)-alpha-D-Man-(1-&gt;3)-[alpha-D-Man-(1-&gt;3)-alpha-D-Man-(1-&gt;6)]-beta-D-Man-(1-&gt;4)-beta-D-GlcNAc-(1-&gt;4)-alpha-D-GlcNAc-diphospho-di-trans,poly-cis-dolichol + a di-trans,poly-cis-dolichyl beta-D-mannosyl phosphate = an alpha-D-Man-(1-&gt;2)-alpha-D-Man-(1-&gt;2)-alpha-D-Man-(1-&gt;3)-[alpha-D-Man-(1-&gt;2)-alpha-D-Man-(1-&gt;3)-alpha-D-Man-(1-&gt;6)]-beta-D-Man-(1-&gt;4)-beta-D-GlcNAc-(1-&gt;4)-alpha-D-GlcNAc-diphospho-di-trans,poly-cis-dolichol + a di-trans,poly-cis-dolichyl phosphate + H(+). The catalysed reaction is an alpha-D-Man-(1-&gt;2)-alpha-D-Man-(1-&gt;2)-alpha-D-Man-(1-&gt;3)-[alpha-D-Man-(1-&gt;2)-alpha-D-Man-(1-&gt;3)-[alpha-D-Man-(1-&gt;6)]-alpha-D-Man-(1-&gt;6)]-beta-D-Man-(1-&gt;4)-beta-D-GlcNAc-(1-&gt;4)-alpha-D-GlcNAc-diphospho-di-trans,poly-cis-dolichol + a di-trans,poly-cis-dolichyl beta-D-mannosyl phosphate = an alpha-D-Man-(1-&gt;2)-alpha-D-Man-(1-&gt;2)-alpha-D-Man-(1-&gt;3)-[alpha-D-Man-(1-&gt;2)-alpha-D-Man-(1-&gt;3)-[alpha-D-Man-(1-&gt;2)-alpha-D-Man-(1-&gt;6)]-alpha-D-Man-(1-&gt;6)]-beta-D-Man-(1-&gt;4)-beta-D-GlcNAc-(1-&gt;4)-alpha-D-GlcNAc-diphospho-di-trans,poly-cis-dolichol + a di-trans,poly-cis-dolichyl phosphate + H(+). Its pathway is protein modification; protein glycosylation. Its function is as follows. Probable alpha-1,2-mannosyltransferase involved in the N-glycosylation pathway. Probably involved in glycosylation of the TNF receptor grnd, regulating its ligand affinity. Required for normal epithelial growth and architecture. Suppressor of JNK-dependent intestinal stem cell proliferation. The chain is Alpha-1,2-mannosyltransferase Alg9 from Drosophila melanogaster (Fruit fly).